The sequence spans 171 residues: 3-hydroxydecanoyl-[acyl-carrier-protein] dehydratase (171 aa).

Residue His-70 is part of the active site.

Belongs to the thioester dehydratase family. FabA subfamily. Homodimer.

The protein localises to the cytoplasm. The enzyme catalyses a (3R)-hydroxyacyl-[ACP] = a (2E)-enoyl-[ACP] + H2O. It carries out the reaction (3R)-hydroxydecanoyl-[ACP] = (2E)-decenoyl-[ACP] + H2O. It catalyses the reaction (2E)-decenoyl-[ACP] = (3Z)-decenoyl-[ACP]. It participates in lipid metabolism; fatty acid biosynthesis. Functionally, necessary for the introduction of cis unsaturation into fatty acids. Catalyzes the dehydration of (3R)-3-hydroxydecanoyl-ACP to E-(2)-decenoyl-ACP and then its isomerization to Z-(3)-decenoyl-ACP. Can catalyze the dehydratase reaction for beta-hydroxyacyl-ACPs with saturated chain lengths up to 16:0, being most active on intermediate chain length. The chain is 3-hydroxydecanoyl-[acyl-carrier-protein] dehydratase from Pseudomonas putida (strain W619).